We begin with the raw amino-acid sequence, 211 residues long: Imidazole glycerol phosphate synthase subunit HisH (211 aa).

Residues 4–211 (RVVILDYGSG…QLLANWVATL (208 aa)) form the Glutamine amidotransferase type-1 domain. Catalysis depends on C82, which acts as the Nucleophile. Residues H192 and E194 contribute to the active site.

As to quaternary structure, heterodimer of HisH and HisF.

It localises to the cytoplasm. It catalyses the reaction 5-[(5-phospho-1-deoxy-D-ribulos-1-ylimino)methylamino]-1-(5-phospho-beta-D-ribosyl)imidazole-4-carboxamide + L-glutamine = D-erythro-1-(imidazol-4-yl)glycerol 3-phosphate + 5-amino-1-(5-phospho-beta-D-ribosyl)imidazole-4-carboxamide + L-glutamate + H(+). The enzyme catalyses L-glutamine + H2O = L-glutamate + NH4(+). Its pathway is amino-acid biosynthesis; L-histidine biosynthesis; L-histidine from 5-phospho-alpha-D-ribose 1-diphosphate: step 5/9. Its function is as follows. IGPS catalyzes the conversion of PRFAR and glutamine to IGP, AICAR and glutamate. The HisH subunit catalyzes the hydrolysis of glutamine to glutamate and ammonia as part of the synthesis of IGP and AICAR. The resulting ammonia molecule is channeled to the active site of HisF. The sequence is that of Imidazole glycerol phosphate synthase subunit HisH from Thermobifida fusca (strain YX).